The following is a 276-amino-acid chain: MQAMKPRINHNRLDENSFYKNGHIHHVRVQDQTIGWVRRVDRSIRTTVEFVVNVLQDYLTDAECSDFDVSHNIKEYLLKIPVVKSLEEMEDYLKQIPDGNISSTLAHIVSIPLGIPIEPYDLLVTDYQDTLHSFIDKIDNQAVREYLLPKIKSLKIGYWCAYTFLPETINQFHPLYLSWLDNKRVFSPNTLQLSEETRDKLDNFLEMYDIPDIGFFSVGDNGSKIIGWDYNYYRHTFCYVNLHEASNEVRKVWEFANQHFHIDTDFEQLEQLEQLE.

This is an uncharacterized protein from Acanthamoeba polyphaga mimivirus (APMV).